The sequence spans 435 residues: ATP-dependent protease ATPase subunit HslU (435 aa).

ATP-binding positions include isoleucine 18, 60-65, aspartate 248, glutamate 313, and arginine 385; that span reads GVGKTE.

The protein belongs to the ClpX chaperone family. HslU subfamily. In terms of assembly, a double ring-shaped homohexamer of HslV is capped on each side by a ring-shaped HslU homohexamer. The assembly of the HslU/HslV complex is dependent on binding of ATP.

It localises to the cytoplasm. In terms of biological role, ATPase subunit of a proteasome-like degradation complex; this subunit has chaperone activity. The binding of ATP and its subsequent hydrolysis by HslU are essential for unfolding of protein substrates subsequently hydrolyzed by HslV. HslU recognizes the N-terminal part of its protein substrates and unfolds these before they are guided to HslV for hydrolysis. This is ATP-dependent protease ATPase subunit HslU from Allorhizobium ampelinum (strain ATCC BAA-846 / DSM 112012 / S4) (Agrobacterium vitis (strain S4)).